Consider the following 181-residue polypeptide: Protein Syd (181 aa).

Belongs to the Syd family.

It is found in the cell inner membrane. Interacts with the SecY protein in vivo. May bind preferentially to an uncomplexed state of SecY, thus functioning either as a chelating agent for excess SecY in the cell or as a regulatory factor that negatively controls the translocase function. The polypeptide is Protein Syd (Shigella flexneri serotype 5b (strain 8401)).